Consider the following 639-residue polypeptide: tRNA uridine 5-carboxymethylaminomethyl modification enzyme MnmG (639 aa).

Residues 13-18 (GGGHAG), Val125, and Ser180 each bind FAD. 273–287 (GPRYCPSIEDKVVRF) is an NAD(+) binding site. Gln370 provides a ligand contact to FAD. The interval 620-639 (KRQGGNGPQSPRPDDGRARA) is disordered.

This sequence belongs to the MnmG family. Homodimer. Heterotetramer of two MnmE and two MnmG subunits. FAD serves as cofactor.

Its subcellular location is the cytoplasm. Functionally, NAD-binding protein involved in the addition of a carboxymethylaminomethyl (cmnm) group at the wobble position (U34) of certain tRNAs, forming tRNA-cmnm(5)s(2)U34. The protein is tRNA uridine 5-carboxymethylaminomethyl modification enzyme MnmG of Thioalkalivibrio sulfidiphilus (strain HL-EbGR7).